A 345-amino-acid chain; its full sequence is Eukaryotic translation initiation factor 3 subunit F (345 aa).

The 137-residue stretch at V30 to G166 folds into the MPN domain. The disordered stretch occupies residues E310–A345. Residues A312 to G321 are compositionally biased toward low complexity. Positions Q322 to G331 are enriched in gly residues. Basic and acidic residues predominate over residues T335–A345.

The protein belongs to the eIF-3 subunit F family. Component of the eukaryotic translation initiation factor 3 (eIF-3) complex.

The protein resides in the cytoplasm. Functionally, component of the eukaryotic translation initiation factor 3 (eIF-3) complex, which is involved in protein synthesis of a specialized repertoire of mRNAs and, together with other initiation factors, stimulates binding of mRNA and methionyl-tRNAi to the 40S ribosome. The eIF-3 complex specifically targets and initiates translation of a subset of mRNAs involved in cell proliferation. This Neosartorya fischeri (strain ATCC 1020 / DSM 3700 / CBS 544.65 / FGSC A1164 / JCM 1740 / NRRL 181 / WB 181) (Aspergillus fischerianus) protein is Eukaryotic translation initiation factor 3 subunit F.